Here is a 272-residue protein sequence, read N- to C-terminus: Auxin-responsive protein IAA5 (272 aa).

Residues 1-92 (MSPPLEPHDY…DSSPRHGASS (92 aa)) are disordered. Low complexity-rich tracts occupy residues 14–33 (SAAA…SPNP) and 40–50 (PRLTLRLGLPG). The EAR-like (transcriptional repression) motif lies at 44–48 (LRLGL). The 105-residue stretch at 152–256 (PLYVKVSMDG…RKLKIMRGSD (105 aa)) folds into the PB1 domain.

This sequence belongs to the Aux/IAA family. As to quaternary structure, homodimers and heterodimers. In terms of tissue distribution, highly expressed in roots and flowers. Expressed in shoots.

It is found in the nucleus. In terms of biological role, aux/IAA proteins are short-lived transcriptional factors that function as repressors of early auxin response genes at low auxin concentrations. The protein is Auxin-responsive protein IAA5 (IAA5) of Oryza sativa subsp. indica (Rice).